A 430-amino-acid polypeptide reads, in one-letter code: Asparagine--tRNA ligase (430 aa).

The protein belongs to the class-II aminoacyl-tRNA synthetase family. As to quaternary structure, homodimer.

It is found in the cytoplasm. It catalyses the reaction tRNA(Asn) + L-asparagine + ATP = L-asparaginyl-tRNA(Asn) + AMP + diphosphate + H(+). This is Asparagine--tRNA ligase from Listeria monocytogenes serovar 1/2a (strain ATCC BAA-679 / EGD-e).